The sequence spans 489 residues: N-succinylglutamate 5-semialdehyde dehydrogenase (489 aa).

NAD(+) is bound at residue 221–226; sequence GSSGTG. Active-site residues include Glu-244 and Cys-278.

It belongs to the aldehyde dehydrogenase family. AstD subfamily.

The enzyme catalyses N-succinyl-L-glutamate 5-semialdehyde + NAD(+) + H2O = N-succinyl-L-glutamate + NADH + 2 H(+). The protein operates within amino-acid degradation; L-arginine degradation via AST pathway; L-glutamate and succinate from L-arginine: step 4/5. Its function is as follows. Catalyzes the NAD-dependent reduction of succinylglutamate semialdehyde into succinylglutamate. This is N-succinylglutamate 5-semialdehyde dehydrogenase from Sorangium cellulosum (strain So ce56) (Polyangium cellulosum (strain So ce56)).